A 333-amino-acid chain; its full sequence is 2-haloacrylate reductase (333 aa).

Position 153 to 159 (153 to 159) interacts with NADP(+); that stretch reads AAAGGMG.

The protein belongs to the zinc-containing alcohol dehydrogenase family.

The catalysed reaction is (S)-2-chloropropanoate + NADP(+) = 2-chloroacrylate + NADPH + H(+). In terms of biological role, involved in the degradation of unsaturated organohalogen compounds. Catalyzes the NADPH-dependent reduction of the carbon-carbon double bond of 2-chloroacrylate to produce (S)-2-chloropropionate, which is probably further metabolized to (R)-lactate by (S)-2-haloacid dehalogenase. Can also use 2-bromoacrylate as substrate. Does not act on acrylate, methacrylate, 1,4-benzoquinone and 1,4-naphthoquinone. This chain is 2-haloacrylate reductase, found in Burkholderia sp.